The chain runs to 513 residues: HTH-type transcriptional regulatory protein TyrR (513 aa).

Residues 2 to 72 form the ACT domain; that stretch reads RLEVFCEDRL…GVTDVRTVPW (71 aa). The PAS domain occupies 78–114; it reads EHLALSALLEALPEPVLSVDMKSKVDMANPASCQLFG. The 223-residue stretch at 206 to 428 folds into the Sigma-54 factor interaction domain; that stretch reads IVAVSPKMKH…LKNAIYRALT (223 aa). Residues 234-241 and 290-299 contribute to the ATP site; these read GDTGTGKD and ANGGSVLLDE. Residues 482-502 constitute a DNA-binding region (H-T-H motif); that stretch reads STRKLAKRLGVSHTAIANKLR.

Homodimer. In presence of tyrosine (or high concentrations of phenylalanine or tryptophan) and ATP, it self-associates to form an hexamer. At low tyrosine concentrations, homodimers can bind to certain recognition sequences referred to as 'strong TyrR boxes'. Homohexamers are the active repressing species, interacting with two or three tyrR boxes in the targeted regulatory DNA, including 'strong TyrR boxes' and lower-affinity sites called 'weak TyrR boxes'.

Its subcellular location is the cytoplasm. Its activity is regulated as follows. Binding of ATP strongly enhances the affinity of TyrR for tyrosine. Its function is as follows. Dual transcriptional regulator of the TyrR regulon, which includes a number of genes coding for proteins involved in the biosynthesis or transport of the three aromatic amino acids, phenylalanine, tyrosine and tryptophan. These three aromatic amino acids act as effectors which bind to the TyrR protein to form an active regulatory protein. Modulates the expression of at least eight unlinked transcription units, including aroF, aroG, aroLM, aroP, mtr, tyrA, tyrB and tyrP. In most cases TyrR acts as a repressor, but positive effects have been observed on the tyrP gene, which is repressed in the presence of tyrosine and activated at high phenylalanine concentrations. Is also involved in activation, but not repression, of mtr expression in association with phenylalanine or tyrosine. Acts by binding specifically to TyrR boxes in the promoter region of the target genes. This Escherichia coli (strain K12) protein is HTH-type transcriptional regulatory protein TyrR.